Here is a 403-residue protein sequence, read N- to C-terminus: MSQQDRVAPQDQDSFLDDQPGVRPIPSFDDMPLHQNLLRGIYSYGFEKPSSIQQRAIAPFTRGGDIIAQAQSGTGKTGAFSIGLLQRLDFRHNLIQGLVLSPTRELALQTAEVISRIGEFLSNSAKFCETFVGGTRVQDDLRKLQAGVVVAVGTPGRVSDVIKRGALRTESLRVLVLDEADEMLSQGFADQIYEIFRFLPKDIQVALFSATMPEEVLELTKKFMRDPVRILVKRESLTLEGIKQFFIAVEEEHKLDTLMDLYETVSIAQSVIFANTRRKVDWIAEKLNQSNHTVSSMHAEMPKSDRERVMNTFRSGSSRVLVTTDLVARGIDVHHVNIVINFDLPTNKENYLHRIGRGGRYGRKGVAINFVTEKDVELLHEIEGHYHTQIDELPVDFAAYLGE.

The segment at 1 to 29 (MSQQDRVAPQDQDSFLDDQPGVRPIPSFD) is disordered. A Q motif motif is present at residues 26 to 54 (PSFDDMPLHQNLLRGIYSYGFEKPSSIQQ). In terms of domain architecture, Helicase ATP-binding spans 57–230 (IAPFTRGGDI…KKFMRDPVRI (174 aa)). ATP is bound at residue 70-77 (AQSGTGKT). A DEAD box motif is present at residues 178-181 (DEAD). The Helicase C-terminal domain occupies 241–401 (GIKQFFIAVE…ELPVDFAAYL (161 aa)).

It belongs to the DEAD box helicase family. eIF4A subfamily. EIF4F is a multi-subunit complex, the composition of which varies with external and internal environmental conditions. It is composed of at least EIF4A, EIF4E and EIF4G.

It carries out the reaction ATP + H2O = ADP + phosphate + H(+). Functionally, ATP-dependent RNA helicase which is a subunit of the eIF4F complex involved in cap recognition and is required for mRNA binding to ribosome. In the current model of translation initiation, eIF4A unwinds RNA secondary structures in the 5'-UTR of mRNAs which is necessary to allow efficient binding of the small ribosomal subunit, and subsequent scanning for the initiator codon. This chain is Probable eukaryotic initiation factor 4A, found in Leishmania braziliensis.